Reading from the N-terminus, the 175-residue chain is Receptor activity-modifying protein 2 (175 aa).

Residues 1-42 form the signal peptide; sequence MASLRVERAGGPRLPRTRVGRPAALRLLLLLGAVLNPHEALA. The Extracellular segment spans residues 43 to 143; sequence QPLPTTGTPG…VQPTFSDPPE (101 aa). Cystine bridges form between C68-C99 and C84-C131. N130 is a glycosylation site (N-linked (GlcNAc...) asparagine). Residues 144–165 form a helical membrane-spanning segment; sequence DVLLAMIIAPICLIPFLITLVV. At 166–175 the chain is on the cytoplasmic side; the sequence is WRSKDSEAQA.

It belongs to the RAMP family. As to quaternary structure, heterodimer of CALCRL and RAMP2; the interaction forms the receptor complex for adrenomedullin/ADM. Heterodimer of CALCR and RAMP2; interaction forms the AMYR2 receptor complex for calcitonin/CALC and amylin/IAPP. As to expression, strongly expressed in lung, breast, immune system and fetal tissues.

It localises to the cell membrane. Accessory protein that interacts with and modulates the function of G-protein coupled receptors including calcitonin gene-related peptide type 1 receptor (CALCRL) and calcitonin receptor (CALCR). Required for the transport of CALCRL to the plasma membrane. Together with CALCRL, form a receptor complex for adrenomedullin/ADM. Together with CALCR, act as a receptor complex for calcitonin/CT/CALC. Together with CALCR, also act as a receptor complex for amylin/IAPP. The sequence is that of Receptor activity-modifying protein 2 from Homo sapiens (Human).